A 120-amino-acid chain; its full sequence is Host cell factor C1 regulator 1 (120 aa).

The disordered stretch occupies residues 1 to 30; that stretch reads MILQQPLERGPPSRDPRATTGVTRGLNASL. The segment covering 20-30 has biased composition (polar residues); the sequence is TGVTRGLNASL. An interaction with HCFC1 region spans residues 58–61; that stretch reads DHPY. A Nuclear export signal motif is present at residues 92–101; sequence IPEALRLLRL.

Interacts with HCFC1.

It localises to the cytoplasm. It is found in the nucleus. Regulates HCFC1 activity by modulating its subcellular localization. Overexpression of HCFC1R1 leads to accumulation of HCFC1 in the cytoplasm. HCFC1R1-mediated export may provide the pool of cytoplasmic HCFC1 required for import of virion-derived VP16 into the nucleus. The chain is Host cell factor C1 regulator 1 (Hcfc1r1) from Mus musculus (Mouse).